We begin with the raw amino-acid sequence, 226 residues long: MKITFLGHAAFLVEEEGLKFLFDPFLTGNPQAKIRPDEITADYILVSHGHGDHLGDTVAIAQRSGATVIGVFELCNFLSRQNVKTHPMHIGGRYNFGQFTVKLTPAWHGSSFGEGPVEYLGNPCGFLLSVGGKTLYHTGDTGLFYDMKLLAEIDPVDILLVPIGGNFTMDVKDALKALELVKPKYAIPMHYNTWPVIAADVGEFQDKGRALGVAIKVLNPGEMVVL.

The protein belongs to the UPF0173 family.

In Carboxydothermus hydrogenoformans (strain ATCC BAA-161 / DSM 6008 / Z-2901), this protein is UPF0173 metal-dependent hydrolase CHY_0920.